A 628-amino-acid polypeptide reads, in one-letter code: Dual specificity testis-specific protein kinase 1 (628 aa).

The interval 1 to 35 is disordered; sequence MAGERPPLRGPGPGETPVEGPGGAGGGPGRGRPSS. A compositionally biased stretch (gly residues) spans 20–30; sequence GPGGAGGGPGR. Residues 52–310 form the Protein kinase domain; sequence FDCAEKIGAG…EITQHLEQIL (259 aa). ATP is bound by residues 58–66 and Lys81; that span reads IGAGFFSEV. Residue Asp170 is the Proton acceptor of the active site. Position 215 is a phosphoserine; by autocatalysis (Ser215). 3 disordered regions span residues 330-376, 424-490, and 538-568; these read TYNQ…DNLT, PESL…QLPL, and RAQH…EEGL. Arg338 carries the post-translational modification Omega-N-methylarginine. Positions 348-357 are enriched in basic and acidic residues; that stretch reads SDPRLSRSRS. The interval 421-526 is required for interaction with YWHAB; that stretch reads VASPESLVQP…NNNPPAVVVN (106 aa). The residue at position 439 (Ser439) is a Phosphoserine. Pro residues predominate over residues 478 to 487; the sequence is EPEPPGPAPQ. The required for interaction with PARVA stretch occupies residues 529–626; that stretch reads QGWAREPWNR…PTPSLQLPGA (98 aa). A required for interaction with SPRED1 and SPRY2. Required for TESK1-mediated dephosphorylation of SPRY2 and SPRY2 inhibition of ERK phosphorylation region spans residues 529–628; sequence QGWAREPWNR…PSLQLPGARS (100 aa).

The protein belongs to the protein kinase superfamily. TKL Ser/Thr protein kinase family. Interacts (via both C- and N-termini) with SPRY4 (via C-terminus); the interaction inhibits TESK1 kinase activity. Interacts with TAOK1; the interaction inhibits TAOK1 kinase activity. Interacts (via C-terminus) with SPRED1 (via C-terminus); the interaction inhibits TESK1 kinase activity. Interacts (via C-terminus) with PARVA/PARVIN (via C-terminus); the interaction inhibits TESK1 kinase activity. Interacts with YWHAB/14-3-3 beta; the interaction is dependent on the phosphorylation of TESK1 Ser-439 and inhibits TESK1 kinase activity. Interacts with SPRY1, SPRY3 and SPRED2. Interacts (via C-terminus) with SPRY2 (via C-terminus); the interaction disrupts SPRY2 interaction with PPP2CA/PP2A-C, possibly by vesicular sequestration of SPRY2. Therefore dephosphorylation of SPRY2 by the serine/threonine-protein phosphatase 2A (PP2A) holoenzyme is lost, inhibiting its interaction with GRB2. Mg(2+) is required as a cofactor. The cofactor is Mn(2+). Autophosphorylated on serine and tyrosine residues. As to expression, weakly expressed in sciatic nerves (at protein level). Highly expressed in testicular germ cells. Expressed at low levels in brain, lung, heart, liver and kidney.

It is found in the cytoplasm. The protein resides in the perinuclear region. Its subcellular location is the cytoskeleton. The protein localises to the microtubule organizing center. It localises to the centrosome. It is found in the cell projection. The protein resides in the lamellipodium. The enzyme catalyses L-seryl-[protein] + ATP = O-phospho-L-seryl-[protein] + ADP + H(+). It catalyses the reaction L-threonyl-[protein] + ATP = O-phospho-L-threonyl-[protein] + ADP + H(+). The catalysed reaction is L-tyrosyl-[protein] + ATP = O-phospho-L-tyrosyl-[protein] + ADP + H(+). With respect to regulation, activated by autophosphorylation on Ser-215. Kinase activity is inhibited by SPRED1. In terms of biological role, dual specificity protein kinase activity catalyzing autophosphorylation and phosphorylation of exogenous substrates on both serine/threonine and tyrosine residues. Regulates the cellular cytoskeleton by enhancing actin stress fiber formation via phosphorylation of cofilin and by preventing microtubule breakdown via inhibition of TAOK1/MARKK kinase activity. Inhibits podocyte motility via regulation of actin cytoskeletal dynamics and phosphorylation of CFL1. Positively regulates integrin-mediated cell spreading, via phosphorylation of cofilin. Suppresses ciliogenesis via multiple pathways; phosphorylation of CFL1, suppression of ciliary vesicle directional trafficking to the ciliary base, and by facilitating YAP1 nuclear localization where it acts as a transcriptional corepressor of the TEAD4 target genes AURKA and PLK1. Probably plays a central role at and after the meiotic phase of spermatogenesis. This chain is Dual specificity testis-specific protein kinase 1 (Tesk1), found in Rattus norvegicus (Rat).